The chain runs to 101 residues: Small ribosomal subunit protein uS14 (101 aa).

A disordered region spans residues 1–20 (MAKTSAVNRNKMRERMASRD). Residues 11–20 (KMRERMASRD) are compositionally biased toward basic and acidic residues.

This sequence belongs to the universal ribosomal protein uS14 family. In terms of assembly, part of the 30S ribosomal subunit. Contacts proteins S3 and S10.

Functionally, binds 16S rRNA, required for the assembly of 30S particles and may also be responsible for determining the conformation of the 16S rRNA at the A site. This is Small ribosomal subunit protein uS14 from Granulibacter bethesdensis (strain ATCC BAA-1260 / CGDNIH1).